Consider the following 308-residue polypeptide: Ribonuclease HIII (308 aa).

The RNase H type-2 domain maps to 88-304 (FHCIGSDEAG…RDKAIHLMNQ (217 aa)). Residues Asp-94, Glu-95, and Asp-199 each coordinate a divalent metal cation.

This sequence belongs to the RNase HII family. RnhC subfamily. The cofactor is Mn(2+). Mg(2+) is required as a cofactor.

It localises to the cytoplasm. The catalysed reaction is Endonucleolytic cleavage to 5'-phosphomonoester.. Functionally, endonuclease that specifically degrades the RNA of RNA-DNA hybrids. The protein is Ribonuclease HIII of Staphylococcus epidermidis (strain ATCC 12228 / FDA PCI 1200).